A 93-amino-acid chain; its full sequence is MQITDVRVRRVSKEGKMKAVVSITLDNEFVVHDIKVIEGEKGLFIAMPSRKAGDGEYRDIAHPINSITRDKIQSIILEKYELAALEGNIEEAE.

It belongs to the SpoVG family.

Functionally, could be involved in septation. This Lachnoclostridium phytofermentans (strain ATCC 700394 / DSM 18823 / ISDg) (Clostridium phytofermentans) protein is Putative septation protein SpoVG.